The chain runs to 123 residues: Small ribosomal subunit protein uS13 (123 aa).

The segment at 92-123 is disordered; that stretch reads RKGLPVRGQKTKTNARTRKGPKKLVGAKKKSK.

It belongs to the universal ribosomal protein uS13 family. As to quaternary structure, part of the 30S ribosomal subunit. Forms a loose heterodimer with protein S19. Forms two bridges to the 50S subunit in the 70S ribosome.

Located at the top of the head of the 30S subunit, it contacts several helices of the 16S rRNA. In the 70S ribosome it contacts the 23S rRNA (bridge B1a) and protein L5 of the 50S subunit (bridge B1b), connecting the 2 subunits; these bridges are implicated in subunit movement. Contacts the tRNAs in the A and P-sites. The protein is Small ribosomal subunit protein uS13 of Clostridium kluyveri (strain NBRC 12016).